The sequence spans 588 residues: Acid beta-fructofuranosidase 1, vacuolar (588 aa).

Residues 1–31 lie on the Cytoplasmic side of the membrane; that stretch reads MDTSTSAYAPLPGEDPLFSGHPPASLRRSWK. Residues 1 to 115 constitute a propeptide, removed in mature form; the sequence is MDTSTSAYAP…LSYNWTNAMF (115 aa). A helical; Signal-anchor for type II membrane protein membrane pass occupies residues 32–52; it reads GFAVIFASVLFLLSLVGLIIH. Over 53–588 the chain is Lumenal; that stretch reads QGPQQPPDVM…LRALRKEVGR (536 aa). The tract at residues 57–86 is disordered; sequence QPPDVMPDKQDEHHHPQSTTPASETTASWE. The segment covering 62–71 has biased composition (basic and acidic residues); that stretch reads MPDKQDEHHH. Residues 73 to 84 show a composition bias toward polar residues; that stretch reads QSTTPASETTAS. Substrate is bound by residues 130 to 133, Gln-149, and Trp-157; that span reads WMND. Residue Asp-133 is part of the active site. Asn-159 carries an N-linked (GlcNAc...) asparagine glycan. 192–193 is a substrate binding site; it reads WS. N-linked (GlcNAc...) asparagine glycosylation occurs at Asn-226. Substrate-binding positions include 256 to 257, Glu-311, and Asp-344; that span reads RD. A disulfide bond links Cys-499 and Cys-545.

Belongs to the glycosyl hydrolase 32 family. In terms of assembly, monomer. May be present in two forms, a 70 kDa monomer and a heterodimer of the 30 kDa and 38 kDa subunits. The ratio of the levels of the two forms within cells appears to be regulated developmentally. Post-translationally, glycosylated. Expressed in buds, stems, roots and leaves. Expressed in the epidermal cells of young leaves and of primordial leaves.

The protein resides in the membrane. Its subcellular location is the vacuole lumen. It catalyses the reaction Hydrolysis of terminal non-reducing beta-D-fructofuranoside residues in beta-D-fructofuranosides.. Its function is as follows. Acidic vacuolar invertase involved in light-induced bud burst. In Rosa hybrid cultivar, this protein is Acid beta-fructofuranosidase 1, vacuolar.